Consider the following 276-residue polypeptide: Extracellular metalloprotease 1 (276 aa).

A signal peptide spans 1 to 18 (MRVSVPVLALAFGSLAAA). H191 is a binding site for Zn(2+). The active site involves E192. H195 contributes to the Zn(2+) binding site. A disordered region spans residues 211–233 (GDYVSDTPPQRSPSSGCPVGRDS). C227 and C253 are disulfide-bonded.

It belongs to the peptidase M43B family.

The protein resides in the secreted. In terms of biological role, secreted metalloproteinase that allows assimilation of proteinaceous substrates. Pays a pivotal role as a pathogenicity determinant during infections and contributes to the ability of the pathogen to persist within the mammalian host. Digests an immunodominant cell surface antigen (SOWgp) and prevents host recognition of endospores during the phase of development when these fungal cells are most vulnerable to phagocytic cell defenses. The polypeptide is Extracellular metalloprotease 1 (MEP1) (Coccidioides posadasii (strain C735) (Valley fever fungus)).